A 117-amino-acid polypeptide reads, in one-letter code: Immunoglobulin heavy variable 5-51 (117 aa).

A signal peptide spans 1–19 (MGSTAILALLLAVLQGVCA). Residues 20–44 (EVQLVQSGAEVKKPGESLKISCKGS) are framework-1. The Ig-like domain occupies 20–117 (EVQLVQSGAE…SDTAMYYCAR (98 aa)). C41 and C115 are oxidised to a cystine. The tract at residues 45–52 (GYSFTSYW) is complementarity-determining-1. The segment at 53-69 (IGWVRQMPGKGLEWMGI) is framework-2. The segment at 70 to 77 (IYPGDSDT) is complementarity-determining-2. The framework-3 stretch occupies residues 78–115 (RYSPSFQGQVTISADKSISTAYLQWSSLKASDTAMYYC). The interval 116 to 117 (AR) is complementarity-determining-3.

Immunoglobulins are composed of two identical heavy chains and two identical light chains; disulfide-linked.

It is found in the secreted. The protein resides in the cell membrane. In terms of biological role, v region of the variable domain of immunoglobulin heavy chains that participates in the antigen recognition. Immunoglobulins, also known as antibodies, are membrane-bound or secreted glycoproteins produced by B lymphocytes. In the recognition phase of humoral immunity, the membrane-bound immunoglobulins serve as receptors which, upon binding of a specific antigen, trigger the clonal expansion and differentiation of B lymphocytes into immunoglobulins-secreting plasma cells. Secreted immunoglobulins mediate the effector phase of humoral immunity, which results in the elimination of bound antigens. The antigen binding site is formed by the variable domain of one heavy chain, together with that of its associated light chain. Thus, each immunoglobulin has two antigen binding sites with remarkable affinity for a particular antigen. The variable domains are assembled by a process called V-(D)-J rearrangement and can then be subjected to somatic hypermutations which, after exposure to antigen and selection, allow affinity maturation for a particular antigen. This chain is Immunoglobulin heavy variable 5-51, found in Homo sapiens (Human).